The chain runs to 629 residues: Transferrin (629 aa).

Residues 1-21 form the signal peptide; sequence MTIKNVLKLAALLGVLALVQA. Transferrin-like domains follow at residues 26–366 and 372–621; these read YRMC…ERDG and MKMC…GLKC. Cystine bridges form between C29–C63 and C38–C54. A Fe(3+)-binding site is contributed by Y111. 6 cysteine pairs are disulfide-bonded: C135–C231, C184–C210, C207–C216, C270–C283, C375–C409, and C385–C403. Hydrogencarbonate is bound by residues T137, R141, V143, and G144. Y225 lines the Fe(3+) pocket. D408 and H561 together coordinate Fe(3+).

Belongs to the transferrin family. Monomer.

Its function is as follows. Transferrins are iron binding transport proteins which bind Fe(3+) ion in association with the binding of an anion, usually bicarbonate. This transferrin binds only one Fe(3+) ion per protein molecule. Transports iron ions from the hemolymph into the eggs during the vitellogenic stage (oogenesis). The chain is Transferrin from Sarcophaga peregrina (Flesh fly).